A 573-amino-acid chain; its full sequence is FACT complex subunit pob3 (573 aa).

Disordered regions lie at residues Ser153 to Ala174 and Leu485 to Lys573. Positions Asp486–Glu495 are enriched in acidic residues. Basic and acidic residues predominate over residues Asp496 to Ala505. 2 stretches are compositionally biased toward acidic residues: residues Asp506 to Ser530 and Ala541 to Glu562.

This sequence belongs to the SSRP1 family. As to quaternary structure, forms a stable heterodimer with spt16. The spt16-pob3 dimer weakly associates with multiple molecules of nhp6 to form the FACT complex.

It localises to the nucleus. Its subcellular location is the chromosome. Component of the FACT complex, a general chromatin factor that acts to reorganize nucleosomes. The FACT complex is involved in multiple processes that require DNA as a template such as mRNA elongation, DNA replication and DNA repair. During transcription elongation the FACT complex acts as a histone chaperone that both destabilizes and restores nucleosomal structure. It facilitates the passage of RNA polymerase II and transcription by promoting the dissociation of one histone H2A-H2B dimer from the nucleosome, then subsequently promotes the reestablishment of the nucleosome following the passage of RNA polymerase II. This chain is FACT complex subunit pob3 (pob3), found in Aspergillus fumigatus (strain ATCC MYA-4609 / CBS 101355 / FGSC A1100 / Af293) (Neosartorya fumigata).